Reading from the N-terminus, the 296-residue chain is MGTIVLKMTAEQISVLQKDLASYATATKNPYAFFSAKVDGTSVIAYTSGKVTFQGAKPEILASRFGYQAEPKQSPDGQNLALIGSDEVGNGSYFGGLAVVASLVTPADHAFLKSLGVDDSKNLNDSKIRQIAPLLEEKIPHKALLLSPRKYNEVVGDGKAHNAVSVKVALHNQAIFLLLQSGAKPDKIVIDAFISEKNYQKYFKNERNHFEFPITLEEKAEGKYLAVAVSSIIARNLFLKNLDKLSQEVGYTLPSGAGAKSDQVAAKLLQAYGDQALQTTAKYHFANTKKAYQRLK.

In terms of domain architecture, RNase H type-2 spans 80–296 (LALIGSDEVG…NTKKAYQRLK (217 aa)). A divalent metal cation-binding residues include aspartate 86, glutamate 87, and aspartate 191.

The protein belongs to the RNase HII family. RnhC subfamily. It depends on Mn(2+) as a cofactor. Requires Mg(2+) as cofactor.

The protein resides in the cytoplasm. The enzyme catalyses Endonucleolytic cleavage to 5'-phosphomonoester.. Functionally, endonuclease that specifically degrades the RNA of RNA-DNA hybrids. The polypeptide is Ribonuclease HIII (Streptococcus thermophilus (strain ATCC BAA-250 / LMG 18311)).